Reading from the N-terminus, the 216-residue chain is Cytidylate kinase (216 aa).

ATP is bound at residue 9–17 (GPAASGKGT).

The protein belongs to the cytidylate kinase family. Type 1 subfamily.

It is found in the cytoplasm. The catalysed reaction is CMP + ATP = CDP + ADP. It catalyses the reaction dCMP + ATP = dCDP + ADP. This chain is Cytidylate kinase, found in Caulobacter sp. (strain K31).